A 148-amino-acid polypeptide reads, in one-letter code: Putative antiporter subunit mnhG2 (148 aa).

The next 3 membrane-spanning stretches (helical) occupy residues 11 to 31 (IAAIMIFLGSIIALISSIGLI), 51 to 71 (VLLTLVGVIIFFISSQGYLSV), and 72 to 92 (RLILALVFINLTSPVGGHLIS). The tract at residues 125-148 (EQLKQRAHEREERRRKTYEKEHDY) is disordered. Basic and acidic residues predominate over residues 127-148 (LKQRAHEREERRRKTYEKEHDY).

Belongs to the CPA3 antiporters (TC 2.A.63) subunit G family. May form a heterooligomeric complex that consists of seven subunits: mnhA2, mnhB2, mnhC2, mnhD2, mnhE2, mnhF2 and mnhG2.

It is found in the cell membrane. In Staphylococcus saprophyticus subsp. saprophyticus (strain ATCC 15305 / DSM 20229 / NCIMB 8711 / NCTC 7292 / S-41), this protein is Putative antiporter subunit mnhG2 (mnhG2).